A 344-amino-acid chain; its full sequence is MRKLFLDAFGEKKLDKPPVWIMRQAGRYLPEYRAVRVKFDNFMDMCRNADACCEVALHPLQRYDLDAAIVFSDILTIPEAMGMDLKFIKGAGPVFSEPIQSQKDLDKLKSIEDSIGSLDYVYNAVKTTSSAINVPLIGFTGSPWTLAAYMIEGSGSKQFNKLRKMMYANPQLMHSLLQRLADITIIYLLEQVKAGASSVMIFDTWGGILPLEHYKNFSLKYMEYIAKNVKQKINIPIVFFTKGGSNFFEEIKDKSCDGVGVDWSVTLKQARHRIGVGKVLQGNFDPAFLYGSKQSIRETVRANIEFIQSDKLNNYIVNLGHGIYPDIDPDSVRVMIDAIREFSA.

Substrate-binding positions include 23–27 (RQAGR), aspartate 73, tyrosine 149, threonine 204, and histidine 321.

Belongs to the uroporphyrinogen decarboxylase family. As to quaternary structure, homodimer.

It is found in the cytoplasm. The catalysed reaction is uroporphyrinogen III + 4 H(+) = coproporphyrinogen III + 4 CO2. The protein operates within porphyrin-containing compound metabolism; protoporphyrin-IX biosynthesis; coproporphyrinogen-III from 5-aminolevulinate: step 4/4. Catalyzes the decarboxylation of four acetate groups of uroporphyrinogen-III to yield coproporphyrinogen-III. The sequence is that of Uroporphyrinogen decarboxylase from Francisella tularensis subsp. holarctica (strain LVS).